The chain runs to 469 residues: Serine hydroxymethyltransferase, cytosolic (469 aa).

Lysine 248 is modified (N6-(pyridoxal phosphate)lysine).

It belongs to the SHMT family. As to quaternary structure, homotetramer. Pyridoxal 5'-phosphate is required as a cofactor.

Its subcellular location is the cytoplasm. It catalyses the reaction (6R)-5,10-methylene-5,6,7,8-tetrahydrofolate + glycine + H2O = (6S)-5,6,7,8-tetrahydrofolate + L-serine. Its pathway is one-carbon metabolism; tetrahydrofolate interconversion. Functionally, interconversion of serine and glycine. This Eremothecium gossypii (strain ATCC 10895 / CBS 109.51 / FGSC 9923 / NRRL Y-1056) (Yeast) protein is Serine hydroxymethyltransferase, cytosolic (SHM2).